The sequence spans 709 residues: Leucine-rich repeat-containing protein 4B (709 aa).

Residues 1–38 (MAQAHIQGSPCPLLPPGRMSWPQGALLLLWLFSPPLRA) form the signal peptide. Residues 50–88 (GGGSPPATSCPAACSCSNQASRVICTRRELAEVPASIPV) form the LRRNT domain. LRR repeat units lie at residues 89 to 110 (NTRY…TFKH), 113 to 134 (HLEI…AFNG), 137 to 158 (SLNT…AFEY), 161 to 182 (KLRE…AFNR), 185 to 207 (SLRR…AFEG), 210 to 231 (NLRY…TALV), 232 to 253 (RLEE…SFQG), 256 to 277 (SLRK…AFDD), and 280 to 301 (SLEE…LFTP). The LRRCT domain occupies 313–365 (NPWHCNCDVLWLSWWLKETVPSNTTCCARCHAPAGLKGRYIGELDQSHFTCYA). The Ig-like C2-type domain occupies 366–454 (PVIVEPPTDL…GNTTASATLN (89 aa)). N-linked (GlcNAc...) asparagine glycosylation is found at asparagine 376, asparagine 402, asparagine 424, asparagine 427, and asparagine 446. Cysteine 387 and cysteine 438 are joined by a disulfide. Residues 496 to 552 (TQPGEEAQQPRGTEKEPPGPTTDGAWGGGRPDAAAPASASTTAPAPRSSRPTEKAFT) form a disordered region. Low complexity predominate over residues 528 to 544 (AAAPASASTTAPAPRSS). The chain crosses the membrane as a helical span at residues 575–595 (IIIGCFVAITFMAAVMLVAFY). Serine 689 carries the phosphoserine modification.

As to quaternary structure, interacts with PTPRF. Interacts with DLG4. Post-translationally, N-glycosylated. O-glycosylated; contains sialic acid. In terms of tissue distribution, mainly expressed in the brain. Widespread distribution in various brain regions (at protein level). Detected both embryonically and postnatally with stronger expression in postnatal stages.

It is found in the membrane. It localises to the presynaptic cell membrane. Functionally, synaptic adhesion protein. Regulates the formation of excitatory synapses. The trans-synaptic adhesion between LRRC4B and PTPRF regulates the formation of excitatory synapses in a bidirectional manner. This Rattus norvegicus (Rat) protein is Leucine-rich repeat-containing protein 4B (Lrrc4b).